The chain runs to 525 residues: GMP synthase [glutamine-hydrolyzing] (525 aa).

A Glutamine amidotransferase type-1 domain is found at 9–207 (RILILDFGSQ…VRDICQCEAL (199 aa)). Cys86 serves as the catalytic Nucleophile. Catalysis depends on residues His181 and Glu183. The 193-residue stretch at 208 to 400 (WTPAKIIDDA…LGLPYDMLYR (193 aa)) folds into the GMPS ATP-PPase domain. 235–241 (SGGVDSS) contributes to the ATP binding site.

Homodimer.

The enzyme catalyses XMP + L-glutamine + ATP + H2O = GMP + L-glutamate + AMP + diphosphate + 2 H(+). The protein operates within purine metabolism; GMP biosynthesis; GMP from XMP (L-Gln route): step 1/1. Its function is as follows. Catalyzes the synthesis of GMP from XMP. In Shigella flexneri serotype 5b (strain 8401), this protein is GMP synthase [glutamine-hydrolyzing].